Consider the following 102-residue polypeptide: MYIGIAHYLTVSAIMFTVGIFGIFLNRKNVIIILMSIELILLSVNLNFVAFSAFLHDLVGQIFALFILTVAAAEAAIGLAILVVFFRNRGSIAVEDVNVMKG.

Helical transmembrane passes span 5–25 (IAHYLTVSAIMFTVGIFGIFL), 31–51 (IIILMSIELILLSVNLNFVAF), and 66–86 (FILTVAAAEAAIGLAILVVFF).

Belongs to the complex I subunit 4L family. As to quaternary structure, NDH-1 is composed of 14 different subunits. Subunits NuoA, H, J, K, L, M, N constitute the membrane sector of the complex.

Its subcellular location is the cell inner membrane. It carries out the reaction a quinone + NADH + 5 H(+)(in) = a quinol + NAD(+) + 4 H(+)(out). Functionally, NDH-1 shuttles electrons from NADH, via FMN and iron-sulfur (Fe-S) centers, to quinones in the respiratory chain. The immediate electron acceptor for the enzyme in this species is believed to be ubiquinone. Couples the redox reaction to proton translocation (for every two electrons transferred, four hydrogen ions are translocated across the cytoplasmic membrane), and thus conserves the redox energy in a proton gradient. In Bartonella bacilliformis (strain ATCC 35685 / KC583 / Herrer 020/F12,63), this protein is NADH-quinone oxidoreductase subunit K.